Reading from the N-terminus, the 300-residue chain is Jacalin-related lectin 32 (300 aa).

N-acetylalanine is present on alanine 2. 2 Jacalin-type lectin domains span residues 2–146 and 154–297; these read AQKV…YFTT and AKKL…HILP.

The protein belongs to the jacalin lectin family.

Involved in gametophytic development. The sequence is that of Jacalin-related lectin 32 (JAL32) from Arabidopsis thaliana (Mouse-ear cress).